The chain runs to 222 residues: 2-hydroxypent-2,4-dienoate hydratase (222 aa).

This sequence belongs to the hydratase/decarboxylase family.

It participates in aromatic compound metabolism; benzoate degradation via hydroxylation. Conversion of 2-hydroxypent-2,4-dienoate into 4-hydroxy-2-oxopentanoate. The protein is 2-hydroxypent-2,4-dienoate hydratase (xylJ) of Pseudomonas putida (Arthrobacter siderocapsulatus).